The following is a 354-amino-acid chain: Opsin-1, short-wave-sensitive 2 (354 aa).

The Extracellular portion of the chain corresponds to M1–V43. N24 carries N-linked (GlcNAc...) asparagine glycosylation. Residues F44–C68 form a helical membrane-spanning segment. The Cytoplasmic segment spans residues T69–N80. A helical transmembrane segment spans residues Y81 to Y106. The Extracellular segment spans residues K107–E120. A disulfide bridge links C117 with C194. The chain crosses the membrane as a helical span at residues G121 to L140. Residues E141–H159 lie on the Cytoplasmic side of the membrane. A helical transmembrane segment spans residues A160 to S183. The Extracellular portion of the chain corresponds to R184–S209. N-linked (GlcNAc...) asparagine glycosylation occurs at N207. The chain crosses the membrane as a helical span at residues Y210–L237. Residues K238–K259 lie on the Cytoplasmic side of the membrane. The chain crosses the membrane as a helical span at residues M260 to V283. The Extracellular portion of the chain corresponds to S284–D291. A helical membrane pass occupies residues L292–M316. At K303 the chain carries N6-(retinylidene)lysine. The Cytoplasmic portion of the chain corresponds to N317–K354.

The protein belongs to the G-protein coupled receptor 1 family. Opsin subfamily. Post-translationally, phosphorylated on some or all of the serine and threonine residues present in the C-terminal region. In terms of tissue distribution, retinal long single cone outer segments.

Its subcellular location is the membrane. Its function is as follows. Visual pigments are the light-absorbing molecules that mediate vision. They consist of an apoprotein, opsin, covalently linked to cis-retinal. This chain is Opsin-1, short-wave-sensitive 2 (opn1sw2), found in Danio rerio (Zebrafish).